Consider the following 339-residue polypeptide: MKVYYDSDADLGLIKSKKIAILGYGSQGHAHAQNLRDSGVAEVAIALRPDSASVKKAQDAGFKVLTNAEAAKWADILMILAPDEHQAAIYAEDLKDNLRPGSAIAFAHGLNIHFGLIEPRKDIDVFMIAPKGPGHTVRSEYVRGGGVPCLVAVDQDASGNAHDIALAYASGIGGGRSGVIETTFREEVETDLFGEQAVLCGGLTALITAGFETLTEAGYAPEMAFFECMHEMKLIVDLIYEAGIANMRYSISNTAEYGDIVSGPRVINEESKKAMKAILDDIQSGRFVSKFVLDNRAGQPELKAARKRMAAHPIEQVGARLRKMMPWIASNKLVDKARN.

A KARI N-terminal Rossmann domain is found at 1-182 (MKVYYDSDAD…GGGRSGVIET (182 aa)). NADP(+)-binding positions include 24-27 (YGSQ), arginine 48, serine 51, serine 53, and 83-86 (DEHQ). The active site involves histidine 108. NADP(+) is bound at residue glycine 134. Residues 183 to 328 (TFREEVETDL…ARLRKMMPWI (146 aa)) form the KARI C-terminal knotted domain. Aspartate 191, glutamate 195, glutamate 227, and glutamate 231 together coordinate Mg(2+). Residue serine 252 participates in substrate binding.

Belongs to the ketol-acid reductoisomerase family. Mg(2+) is required as a cofactor.

It catalyses the reaction (2R)-2,3-dihydroxy-3-methylbutanoate + NADP(+) = (2S)-2-acetolactate + NADPH + H(+). It carries out the reaction (2R,3R)-2,3-dihydroxy-3-methylpentanoate + NADP(+) = (S)-2-ethyl-2-hydroxy-3-oxobutanoate + NADPH + H(+). The protein operates within amino-acid biosynthesis; L-isoleucine biosynthesis; L-isoleucine from 2-oxobutanoate: step 2/4. It functions in the pathway amino-acid biosynthesis; L-valine biosynthesis; L-valine from pyruvate: step 2/4. Its function is as follows. Involved in the biosynthesis of branched-chain amino acids (BCAA). Catalyzes an alkyl-migration followed by a ketol-acid reduction of (S)-2-acetolactate (S2AL) to yield (R)-2,3-dihydroxy-isovalerate. In the isomerase reaction, S2AL is rearranged via a Mg-dependent methyl migration to produce 3-hydroxy-3-methyl-2-ketobutyrate (HMKB). In the reductase reaction, this 2-ketoacid undergoes a metal-dependent reduction by NADPH to yield (R)-2,3-dihydroxy-isovalerate. The protein is Ketol-acid reductoisomerase (NADP(+)) of Zymomonas mobilis subsp. mobilis (strain ATCC 31821 / ZM4 / CP4).